Consider the following 481-residue polypeptide: Glutamyl-tRNA(Gln) amidotransferase subunit A (481 aa).

Active-site charge relay system residues include Lys77 and Ser151. Catalysis depends on Ser175, which acts as the Acyl-ester intermediate.

The protein belongs to the amidase family. GatA subfamily. As to quaternary structure, heterotrimer of A, B and C subunits.

The enzyme catalyses L-glutamyl-tRNA(Gln) + L-glutamine + ATP + H2O = L-glutaminyl-tRNA(Gln) + L-glutamate + ADP + phosphate + H(+). In terms of biological role, allows the formation of correctly charged Gln-tRNA(Gln) through the transamidation of misacylated Glu-tRNA(Gln) in organisms which lack glutaminyl-tRNA synthetase. The reaction takes place in the presence of glutamine and ATP through an activated gamma-phospho-Glu-tRNA(Gln). In Rubrobacter xylanophilus (strain DSM 9941 / JCM 11954 / NBRC 16129 / PRD-1), this protein is Glutamyl-tRNA(Gln) amidotransferase subunit A.